We begin with the raw amino-acid sequence, 488 residues long: Cytochrome P450 71A24 (488 aa).

Residues 3–23 form a helical membrane-spanning segment; sequence MMMMIILLLCSIILITILFFK. Cys433 contributes to the heme binding site.

It belongs to the cytochrome P450 family. It depends on heme as a cofactor.

Its subcellular location is the membrane. The chain is Cytochrome P450 71A24 (CYP71A24) from Arabidopsis thaliana (Mouse-ear cress).